The following is a 312-amino-acid chain: DNA-directed RNA polymerase subunit alpha (312 aa).

Positions 1-226 (MIEFEKPNIT…EHLNLFTNLT (226 aa)) are alpha N-terminal domain (alpha-NTD). Positions 243-312 (DDRILERTIE…DLGLGLKNDK (70 aa)) are alpha C-terminal domain (alpha-CTD).

It belongs to the RNA polymerase alpha chain family. In terms of assembly, homodimer. The RNAP catalytic core consists of 2 alpha, 1 beta, 1 beta' and 1 omega subunit. When a sigma factor is associated with the core the holoenzyme is formed, which can initiate transcription.

It carries out the reaction RNA(n) + a ribonucleoside 5'-triphosphate = RNA(n+1) + diphosphate. DNA-dependent RNA polymerase catalyzes the transcription of DNA into RNA using the four ribonucleoside triphosphates as substrates. This Streptococcus sanguinis (strain SK36) protein is DNA-directed RNA polymerase subunit alpha.